A 94-amino-acid chain; its full sequence is Integration host factor subunit beta (94 aa).

This sequence belongs to the bacterial histone-like protein family. Heterodimer of an alpha and a beta chain.

This protein is one of the two subunits of integration host factor, a specific DNA-binding protein that functions in genetic recombination as well as in transcriptional and translational control. This Dickeya dadantii (strain 3937) (Erwinia chrysanthemi (strain 3937)) protein is Integration host factor subunit beta (ihfB).